The sequence spans 137 residues: Protein CTLA-2-alpha (137 aa).

The first 27 residues, 1–27, serve as a signal peptide directing secretion; that stretch reads MMVSICEQKLQHFSAVFLLILCLGMMS. A run of 2 repeats spans residues 39 to 41 and 42 to 44. The segment at 39 to 44 is 2 X 3 AA tandem repeats of E-W-K; sequence EWKEWK. The tract at residues 114–137 is disordered; that stretch reads APDLPEYEDLGKNSYLTPGRAQPE.

It to the propeptide regions of cysteine proteases.

The protein localises to the secreted. Its function is as follows. Not known, expressed in activated T-cell. The protein is Protein CTLA-2-alpha (Ctla2a) of Mus musculus (Mouse).